A 395-amino-acid chain; its full sequence is Phosphoglycerate kinase (395 aa).

Substrate-binding positions include 21 to 23, Arg-36, 59 to 62, Arg-114, and Arg-147; these read DIN and HFGR. ATP-binding positions include Lys-197, Glu-322, and 352 to 355; that span reads GGDT.

This sequence belongs to the phosphoglycerate kinase family. In terms of assembly, monomer.

The protein localises to the cytoplasm. It catalyses the reaction (2R)-3-phosphoglycerate + ATP = (2R)-3-phospho-glyceroyl phosphate + ADP. It participates in carbohydrate degradation; glycolysis; pyruvate from D-glyceraldehyde 3-phosphate: step 2/5. The polypeptide is Phosphoglycerate kinase (Roseobacter denitrificans (strain ATCC 33942 / OCh 114) (Erythrobacter sp. (strain OCh 114))).